A 245-amino-acid chain; its full sequence is 1-(5-phosphoribosyl)-5-[(5-phosphoribosylamino)methylideneamino] imidazole-4-carboxamide isomerase (245 aa).

The Proton acceptor role is filled by Asp7. Asp129 serves as the catalytic Proton donor.

The protein belongs to the HisA/HisF family.

The protein localises to the cytoplasm. The enzyme catalyses 1-(5-phospho-beta-D-ribosyl)-5-[(5-phospho-beta-D-ribosylamino)methylideneamino]imidazole-4-carboxamide = 5-[(5-phospho-1-deoxy-D-ribulos-1-ylimino)methylamino]-1-(5-phospho-beta-D-ribosyl)imidazole-4-carboxamide. The protein operates within amino-acid biosynthesis; L-histidine biosynthesis; L-histidine from 5-phospho-alpha-D-ribose 1-diphosphate: step 4/9. This Aliivibrio fischeri (strain MJ11) (Vibrio fischeri) protein is 1-(5-phosphoribosyl)-5-[(5-phosphoribosylamino)methylideneamino] imidazole-4-carboxamide isomerase.